Reading from the N-terminus, the 353-residue chain is Protein-glutamate methylesterase/protein-glutamine glutaminase 4 (353 aa).

One can recognise a Response regulatory domain in the interval 7–124 (RILVAEDSPT…SPDFDADSRR (118 aa)). Aspartate 58 is subject to 4-aspartylphosphate. The 193-residue stretch at 158–350 (PVSPTRPGVV…SRLTSAFRGS (193 aa)) folds into the CheB-type methylesterase domain. Residues serine 172, histidine 199, and aspartate 292 contribute to the active site.

This sequence belongs to the CheB family. Post-translationally, phosphorylated by CheA. Phosphorylation of the N-terminal regulatory domain activates the methylesterase activity.

The protein localises to the cytoplasm. It carries out the reaction [protein]-L-glutamate 5-O-methyl ester + H2O = L-glutamyl-[protein] + methanol + H(+). It catalyses the reaction L-glutaminyl-[protein] + H2O = L-glutamyl-[protein] + NH4(+). In terms of biological role, involved in chemotaxis. Part of a chemotaxis signal transduction system that modulates chemotaxis in response to various stimuli. Catalyzes the demethylation of specific methylglutamate residues introduced into the chemoreceptors (methyl-accepting chemotaxis proteins or MCP) by CheR. Also mediates the irreversible deamidation of specific glutamine residues to glutamic acid. The polypeptide is Protein-glutamate methylesterase/protein-glutamine glutaminase 4 (Myxococcus xanthus (strain DK1622)).